A 574-amino-acid polypeptide reads, in one-letter code: Splicing factor U2af large subunit A (574 aa).

A disordered region spans residues 1–180; it reads MAEHEEQPYE…SKRVSGFDQG (180 aa). A compositionally biased stretch (low complexity) spans 18-41; it reads PAPASAYAEYPAPEGSPPAAAAKP. The span at 53 to 143 shows a compositional bias: basic and acidic residues; that stretch reads RSQHETQPHD…ERRRDRDRDG (91 aa). Basic residues predominate over residues 144-172; that stretch reads HRRHRSRSRSPSKGRDRRSRSRSRSRSSK. 3 RRM domains span residues 238-321, 358-436, and 479-565; these read RRVY…RPTD, DRIF…RANQ, and QVVS…YPED.

It belongs to the splicing factor SR family.

Its subcellular location is the nucleus. Functionally, necessary for the splicing of pre-mRNA. This Oryza sativa subsp. japonica (Rice) protein is Splicing factor U2af large subunit A (U2AF65A).